Here is a 427-residue protein sequence, read N- to C-terminus: Glutamate-1-semialdehyde 2,1-aminomutase (427 aa).

At Lys265 the chain carries N6-(pyridoxal phosphate)lysine.

This sequence belongs to the class-III pyridoxal-phosphate-dependent aminotransferase family. HemL subfamily. In terms of assembly, homodimer. Pyridoxal 5'-phosphate is required as a cofactor.

The protein localises to the cytoplasm. The enzyme catalyses (S)-4-amino-5-oxopentanoate = 5-aminolevulinate. The protein operates within porphyrin-containing compound metabolism; protoporphyrin-IX biosynthesis; 5-aminolevulinate from L-glutamyl-tRNA(Glu): step 2/2. In Pseudomonas fluorescens (strain SBW25), this protein is Glutamate-1-semialdehyde 2,1-aminomutase.